A 274-amino-acid polypeptide reads, in one-letter code: Probable glycerophosphodiester phosphodiesterase 1 (274 aa).

In terms of domain architecture, GP-PDE spans 12–264 (PFVVAHRGAS…HHPGRTKAWL (253 aa)). H17 functions as the Proton acceptor in the catalytic mechanism. Residues E44 and D46 each contribute to the Ca(2+) site. The active-site Proton donor is the H59. Residue E126 participates in Ca(2+) binding.

The protein belongs to the glycerophosphoryl diester phosphodiesterase family. It depends on Ca(2+) as a cofactor.

It carries out the reaction a sn-glycero-3-phosphodiester + H2O = an alcohol + sn-glycerol 3-phosphate + H(+). Its function is as follows. Glycerophosphodiester phosphodiesterase hydrolyzes glycerophosphodiesters into glycerol-3-phosphate (G3P) and the corresponding alcohol. This is Probable glycerophosphodiester phosphodiesterase 1 (glpQ1) from Mycobacterium tuberculosis (strain CDC 1551 / Oshkosh).